The following is a 354-amino-acid chain: Uroporphyrinogen decarboxylase (354 aa).

Residues Arg27–Arg31, Asp77, Tyr154, Thr209, and His327 each bind substrate.

Belongs to the uroporphyrinogen decarboxylase family. Homodimer.

It localises to the cytoplasm. It carries out the reaction uroporphyrinogen III + 4 H(+) = coproporphyrinogen III + 4 CO2. Its pathway is porphyrin-containing compound metabolism; protoporphyrin-IX biosynthesis; coproporphyrinogen-III from 5-aminolevulinate: step 4/4. Catalyzes the decarboxylation of four acetate groups of uroporphyrinogen-III to yield coproporphyrinogen-III. The polypeptide is Uroporphyrinogen decarboxylase (Escherichia coli O81 (strain ED1a)).